The following is a 373-amino-acid chain: GDP-mannose 4,6-dehydratase (373 aa).

NADP(+) contacts are provided by residues 9–14 (GVTGQD), 64–65 (DL), 86–90 (LGAMS), and tyrosine 101. Threonine 133 is an active-site residue. Catalysis depends on nucleophile residues glutamate 135 and tyrosine 157. Residues lysine 161, histidine 187, and arginine 192 each coordinate NADP(+).

It belongs to the NAD(P)-dependent epimerase/dehydratase family. GDP-mannose 4,6-dehydratase subfamily. NADP(+) is required as a cofactor.

The enzyme catalyses GDP-alpha-D-mannose = GDP-4-dehydro-alpha-D-rhamnose + H2O. Its pathway is nucleotide-sugar biosynthesis; GDP-L-fucose biosynthesis via de novo pathway; GDP-L-fucose from GDP-alpha-D-mannose: step 1/2. Functionally, catalyzes the conversion of GDP-D-mannose to GDP-4-dehydro-6-deoxy-D-mannose. The protein is GDP-mannose 4,6-dehydratase of Escherichia coli O157:H7.